A 66-amino-acid polypeptide reads, in one-letter code: Large ribosomal subunit protein bL35 (66 aa).

Belongs to the bacterial ribosomal protein bL35 family.

In Jannaschia sp. (strain CCS1), this protein is Large ribosomal subunit protein bL35.